The sequence spans 194 residues: Imidazoleglycerol-phosphate dehydratase (194 aa).

The protein belongs to the imidazoleglycerol-phosphate dehydratase family.

It localises to the cytoplasm. The enzyme catalyses D-erythro-1-(imidazol-4-yl)glycerol 3-phosphate = 3-(imidazol-4-yl)-2-oxopropyl phosphate + H2O. It functions in the pathway amino-acid biosynthesis; L-histidine biosynthesis; L-histidine from 5-phospho-alpha-D-ribose 1-diphosphate: step 6/9. This Bacillus cereus (strain B4264) protein is Imidazoleglycerol-phosphate dehydratase.